Reading from the N-terminus, the 181-residue chain is Large ribosomal subunit protein uL5 (181 aa).

It belongs to the universal ribosomal protein uL5 family. In terms of assembly, part of the 50S ribosomal subunit; part of the 5S rRNA/L5/L18/L25 subcomplex. Contacts the 5S rRNA and the P site tRNA. Forms a bridge to the 30S subunit in the 70S ribosome.

This is one of the proteins that bind and probably mediate the attachment of the 5S RNA into the large ribosomal subunit, where it forms part of the central protuberance. In the 70S ribosome it contacts protein S13 of the 30S subunit (bridge B1b), connecting the 2 subunits; this bridge is implicated in subunit movement. Contacts the P site tRNA; the 5S rRNA and some of its associated proteins might help stabilize positioning of ribosome-bound tRNAs. The sequence is that of Large ribosomal subunit protein uL5 from Helicobacter pylori (strain ATCC 700392 / 26695) (Campylobacter pylori).